Reading from the N-terminus, the 217-residue chain is tRNA (guanine-N(7)-)-methyltransferase (217 aa).

4 residues coordinate S-adenosyl-L-methionine: Glu43, Asp68, Asn101, and Asn123. Lys127 provides a ligand contact to substrate. An interaction with RNA region spans residues 129 to 134; that stretch reads RHNKRR. Substrate is bound by residues Asp159 and 196–199; that span reads TEYE.

It belongs to the class I-like SAM-binding methyltransferase superfamily. TrmB family.

The catalysed reaction is guanosine(46) in tRNA + S-adenosyl-L-methionine = N(7)-methylguanosine(46) in tRNA + S-adenosyl-L-homocysteine. Its pathway is tRNA modification; N(7)-methylguanine-tRNA biosynthesis. Functionally, catalyzes the formation of N(7)-methylguanine at position 46 (m7G46) in tRNA. The polypeptide is tRNA (guanine-N(7)-)-methyltransferase (Clostridium botulinum (strain 657 / Type Ba4)).